A 311-amino-acid polypeptide reads, in one-letter code: D-alanine--D-alanine ligase (311 aa).

The ATP-grasp domain maps to 105 to 306 (KQLYIHAGLP…FSALLDRLIE (202 aa)). 133–188 (ADRLGLPVVVKPEHEGSSIGLSIVRNRDQLAAAVETGWQYDRRCLIEKYVHGIEIT) contacts ATP. Residues Asp-261, Glu-273, and Asn-275 each contribute to the Mg(2+) site.

Belongs to the D-alanine--D-alanine ligase family. The cofactor is Mg(2+). Mn(2+) is required as a cofactor.

It localises to the cytoplasm. It catalyses the reaction 2 D-alanine + ATP = D-alanyl-D-alanine + ADP + phosphate + H(+). The protein operates within cell wall biogenesis; peptidoglycan biosynthesis. Functionally, cell wall formation. In Syntrophobacter fumaroxidans (strain DSM 10017 / MPOB), this protein is D-alanine--D-alanine ligase.